Consider the following 531-residue polypeptide: MTETGVIGCGCRGVTGGNFFHPGGFSLKSCFLEQSTKRNRNFFRSVSMIPPFKRGRFITKLRSVAGNSRIFSMDAREKSRSFVLVSSRHKRVPVFVMMPIDTFGIDASGCPKIKRLKALTVSLKALKLAGVHGIAVEVWWGIVERFSPLEFKWSLYEELFRLISEAGLKLHVALCFHSNMHLFGGKGGISLPLWIREIGDVNKDIYYRDKSGFSNNDYLTLGVDQLPLFGGRTAVQCYEDFMLSFSTKFEPYLGNVIEEISIGLGPSGELRYPAHPSGDGRWKFPGIGEFQCHDKYMMEDLMAVASQEGKPQWGSRDPPNTGCYNSFPSGVPFFEEGNDSFLSDYGRFFLEWYSGKLICHADAILAKAADVLRRRQEEEKSSVMLVAKIGGIYWWYKTSSHPAELTAGYYNTSLRDGYDPVASVLSRHGAALNIPCLDMADSEIPEKYLCSPEGLRRQIHDVSKKWTIHVTGRNTSERFDEMGLRQIRENCVQPNGDTLRSFTFCRMNEKIFRVENWNNFVPFIRQMSADM.

A chloroplast-targeting transit peptide spans 1–62 (MTETGVIGCG…KRGRFITKLR (62 aa)).

It belongs to the glycosyl hydrolase 14 family. In terms of tissue distribution, preferentially expressed in vascular tissue of cotyledons, leaves, petioles, stems, petals, siliques and roots, particularly in phloem. Also present in root tip.

The protein localises to the plastid. The protein resides in the chloroplast. No alpha-1,4-glucan hydrolase activity, including beta-amylase, alpha-amylase, a-glucosidase or alpha-amyloglucosidase. However, facilitates or regulates starch breakdown, especially at night, by a mechanism involving direct interaction with starch or other alpha-1,4-glucan. The sequence is that of Inactive beta-amylase 4, chloroplastic (BAM4) from Arabidopsis thaliana (Mouse-ear cress).